A 94-amino-acid chain; its full sequence is Large ribosomal subunit protein bL27 (94 aa).

A propeptide spanning residues 1-9 (MLRLDLQFF) is cleaved from the precursor.

Belongs to the bacterial ribosomal protein bL27 family. Post-translationally, the N-terminus is cleaved by ribosomal processing cysteine protease Prp.

The sequence is that of Large ribosomal subunit protein bL27 from Bacillus velezensis (strain DSM 23117 / BGSC 10A6 / LMG 26770 / FZB42) (Bacillus amyloliquefaciens subsp. plantarum).